The chain runs to 675 residues: G-protein-signaling modulator 1 (675 aa).

The mediates association with membranes stretch occupies residues 1–509 (MAGPAPPVAD…DLLTKFQSSR (509 aa)). 9 TPR repeats span residues 28–61 (CLELALEGERLCKAGDFKTGVAFFEAAVQVGTED), 66–99 (SAIYSQLGNAYFYLKEHGRALEYHKHDLLLARTI), 106–139 (AKASGNLGNTLKVLGRFDEAAVCCQRHLSIAQEQ), 146–181 (ARALYNIGNVYHAKGKQLSWNAANATQDPGHLPPDV), 183–202 (ETLCKASEFYERNLSLVKEL), 209–242 (GRAYGNLGNTHYLLGNFTEATTFHKERLAIAKEF), 249–282 (RRAYSNLGNAHVFLGRFDVAAEYYKKTLQLSRQL), 289–322 (AQACYSLGNTYTLLQDYERAAEYHLRHLLIAQEL), and 329–362 (GRACWSLGNAYVSMGRPAQALTFAKKHLQISQEI). Residues 364 to 487 (DRHGELTARM…VRVHVPRTSI (124 aa)) form an interaction with STK11/LKB1 region. The disordered stretch occupies residues 391-412 (SEKPDLAGYEAQGARPKRTQRL). Phosphoserine is present on Ser413. The residue at position 421 (Arg421) is an Omega-N-methylarginine. Residues 424-442 (LEREQNGDSHHSGDWRGPS) are compositionally biased toward basic and acidic residues. A disordered region spans residues 424 to 492 (LEREQNGDSH…PRTSIPRAPS (69 aa)). Residues Ser445, Ser469, Ser471, Ser492, and Ser493 each carry the phosphoserine modification. The segment covering 454–469 (KYQEGPDAERRPREGS) has biased composition (basic and acidic residues). Residues 495 to 517 (EECFFDLLTKFQSSRMDDQRCPL) enclose the GoLoco 1 domain. Phosphoserine occurs at positions 545 and 569. GoLoco domains lie at 548 to 570 (TEEFFDLIASSQSRRLDDQRASV), 596 to 618 (GDDFFNMLIKYQSSRIDDQRCPP), and 630 to 652 (DEDFFSLIQRVQAKRMDEQRVDL). 2 disordered regions span residues 610-630 (RIDDQRCPPPDVLPRGPTMPD) and 644-675 (RMDEQRVDLAGGPEQGAGGPPEPQQQCQPGAS).

The protein belongs to the GPSM family. As to quaternary structure, interacts with GNAI1, GNAI2 and GNAI3 preferentially in their GDP-bound state. May also interact with GNAO1. Interacts with STK11/LKB1 and MACF1. Interacts with INSC/inscuteable and FRMPD1. Phosphorylation regulates interaction with G(i/o) alpha. As to expression, expressed in intestinal cells.

It is found in the cytoplasm. The protein resides in the cytosol. Its subcellular location is the endoplasmic reticulum membrane. The protein localises to the golgi apparatus membrane. It localises to the cell membrane. In terms of biological role, guanine nucleotide dissociation inhibitor (GDI) which functions as a receptor-independent activator of heterotrimeric G-protein signaling. Keeps G(i/o) alpha subunit in its GDP-bound form thus uncoupling heterotrimeric G-proteins signaling from G protein-coupled receptors. Controls spindle orientation and asymmetric cell fate of cerebral cortical progenitors. May also be involved in macroautophagy in intestinal cells. May play a role in drug addiction. The protein is G-protein-signaling modulator 1 (GPSM1) of Homo sapiens (Human).